Here is a 130-residue protein sequence, read N- to C-terminus: Cystatin domain-containing protein 1 (130 aa).

Residues methionine 1–lysine 23 form the signal peptide. One can recognise a Cystatin domain in the interval alanine 37–tryptophan 116. Cystine bridges form between cysteine 84-cysteine 94 and cysteine 107-cysteine 127.

The protein belongs to the cystatin family.

Its subcellular location is the secreted. In terms of biological role, may play a specialized role in spermatogenesis. This Rattus norvegicus (Rat) protein is Cystatin domain-containing protein 1.